The chain runs to 332 residues: MVVLSQPALNQFFLLKPFKSTPLFTGIPVVDLTHPDAKNLIVNACRDFGFFKLVNHGVPLELMANLENEALRFFKKSQSEKDRAGPPDPFGYGSKRIGPNGDVGWVEYLLLNTNPDVISPKSLCIFRENPHHFRAVVENYITAVKNMCYAVLELMAEGLGIRQRNTLSRLLKDEKSDSCFRLNHYPPCPEVQALNRNLVGFGEHTDPQIISVLRSNSTSGLQICLTDGTWVSVPPDQTSFFINVGDALQVMTNGRFKSVKHRVLADTTKSRLSMIYFGGPALSENIAPLPSVMLKGEECLYKEFTWCEYKKAAYTSRLADNRLAPFQKSAAD.

In terms of domain architecture, Fe2OG dioxygenase spans 175 to 280 (KSDSCFRLNH…RLSMIYFGGP (106 aa)). Fe cation contacts are provided by H204, D206, and H261. Residue R271 is part of the active site.

It belongs to the iron/ascorbate-dependent oxidoreductase family. GA2OX subfamily. Fe cation serves as cofactor.

The enzyme catalyses gibberellin A1 + 2-oxoglutarate + O2 = gibberellin A8 + succinate + CO2. It functions in the pathway plant hormone biosynthesis; gibberellin biosynthesis. In terms of biological role, catalyzes the 2-beta-hydroxylation of several biologically active gibberellins, leading to the homeostatic regulation of their endogenous level. Catabolism of gibberellins (GAs) plays a central role in plant development. Converts GA9/GA20 to GA51/GA29 and GA4/GA1 to GA34/GA8. The chain is Gibberellin 2-beta-dioxygenase (GA2OX1) from Phaseolus coccineus (Scarlet runner bean).